The primary structure comprises 256 residues: Trans-aconitate 2-methyltransferase (256 aa).

This sequence belongs to the methyltransferase superfamily. Tam family.

The protein resides in the cytoplasm. The enzyme catalyses trans-aconitate + S-adenosyl-L-methionine = (E)-3-(methoxycarbonyl)pent-2-enedioate + S-adenosyl-L-homocysteine. Catalyzes the S-adenosylmethionine monomethyl esterification of trans-aconitate. The sequence is that of Trans-aconitate 2-methyltransferase from Rhodopseudomonas palustris (strain BisB18).